Consider the following 162-residue polypeptide: MRHGKKFNHLSRQKGHRAAMLANMACSLIEHKRINTTVAKAKALKQFVEPLITKSKDDTTHNRRICFAYLRSKYAVTDLFRDVAAKVGDRPGGYTRIIKLGNRLGDNADMAMIELVDFNELYNGGKKEEVKTKSRRGGKAKKAEPTTEAPANTTEETTDSAE.

The segment at 126-162 (KKEEVKTKSRRGGKAKKAEPTTEAPANTTEETTDSAE) is disordered. Low complexity predominate over residues 146–155 (TTEAPANTTE).

It belongs to the bacterial ribosomal protein bL17 family. As to quaternary structure, part of the 50S ribosomal subunit. Contacts protein L32.

The chain is Large ribosomal subunit protein bL17 from Flavobacterium psychrophilum (strain ATCC 49511 / DSM 21280 / CIP 103535 / JIP02/86).